The following is a 423-amino-acid chain: Dihydrolipoyllysine-residue succinyltransferase component of 2-oxoglutarate dehydrogenase complex (423 aa).

A Lipoyl-binding domain is found at 1-76 (MPEVKVPELA…EVGQAIAVIG (76 aa)). An N6-lipoyllysine modification is found at lysine 42. The segment at 76-185 (GEGSGNASKE…APAKEEKKYN (110 aa)) is disordered. Residues 80–96 (GNASKENSNDNTPQQND) are compositionally biased toward polar residues. Positions 99 to 115 (TNNKKEETTNKSADKAE) are enriched in basic and acidic residues. The span at 116–131 (VNQTNDDNQQRVNATP) shows a compositional bias: polar residues. One can recognise a Peripheral subunit-binding (PSBD) domain in the interval 128–164 (NATPSARRYARENGVNLAEVSPKTNDVVRKEDIDKKQ). Positions 153-164 (DVVRKEDIDKKQ) are enriched in basic and acidic residues. Residues 165–177 (QAPASTQTTQQAP) are compositionally biased toward low complexity. Residues histidine 394 and aspartate 398 contribute to the active site.

Belongs to the 2-oxoacid dehydrogenase family. In terms of assembly, forms a 24-polypeptide structural core with octahedral symmetry. Part of the 2-oxoglutarate dehydrogenase (OGDH) complex composed of E1 (2-oxoglutarate dehydrogenase), E2 (dihydrolipoamide succinyltransferase) and E3 (dihydrolipoamide dehydrogenase); the complex contains multiple copies of the three enzymatic components (E1, E2 and E3). (R)-lipoate serves as cofactor.

The enzyme catalyses N(6)-[(R)-dihydrolipoyl]-L-lysyl-[protein] + succinyl-CoA = N(6)-[(R)-S(8)-succinyldihydrolipoyl]-L-lysyl-[protein] + CoA. The protein operates within amino-acid degradation; L-lysine degradation via saccharopine pathway; glutaryl-CoA from L-lysine: step 6/6. Its function is as follows. E2 component of the 2-oxoglutarate dehydrogenase (OGDH) complex which catalyzes the second step in the conversion of 2-oxoglutarate to succinyl-CoA and CO(2). The polypeptide is Dihydrolipoyllysine-residue succinyltransferase component of 2-oxoglutarate dehydrogenase complex (odhB) (Staphylococcus aureus (strain MRSA252)).